The chain runs to 153 residues: Nitrogen regulatory protein (153 aa).

Residues 5-148 (DLVAPEAILP…QAIYSVLALP (144 aa)) form the PTS EIIA type-2 domain. H66 functions as the Tele-phosphohistidine intermediate in the catalytic mechanism.

Its subcellular location is the cytoplasm. Seems to have a role in regulating nitrogen assimilation. In Bradyrhizobium diazoefficiens (strain JCM 10833 / BCRC 13528 / IAM 13628 / NBRC 14792 / USDA 110), this protein is Nitrogen regulatory protein (ptsN).